Consider the following 444-residue polypeptide: Glutamate dehydrogenase (444 aa).

Residue K124 is part of the active site.

It belongs to the Glu/Leu/Phe/Val dehydrogenases family. As to quaternary structure, homohexamer.

The enzyme catalyses L-glutamate + NAD(+) + H2O = 2-oxoglutarate + NH4(+) + NADH + H(+). It carries out the reaction L-glutamate + NADP(+) + H2O = 2-oxoglutarate + NH4(+) + NADPH + H(+). This Bacteroides thetaiotaomicron (strain ATCC 29148 / DSM 2079 / JCM 5827 / CCUG 10774 / NCTC 10582 / VPI-5482 / E50) protein is Glutamate dehydrogenase (gdhA).